Consider the following 156-residue polypeptide: MTIHHETRPTLNLIRLANGEGLELPAYESQGAAGMDLRAAVDGDAPLTLPPGKRALVPTGFIFEIPEGFEGQVRPRSGLAFKHGITCLNSPGTVDSDYRGEVKVLLANLGEEAFVIERGMRIAQMVIAPVTQARVAEITAASETARGAGGFGSTGV.

Substrate is bound by residues Arg76–Gly78, Asn89, Thr93–Asp95, and Lys103.

It belongs to the dUTPase family. The cofactor is Mg(2+).

The catalysed reaction is dUTP + H2O = dUMP + diphosphate + H(+). It participates in pyrimidine metabolism; dUMP biosynthesis; dUMP from dCTP (dUTP route): step 2/2. Functionally, this enzyme is involved in nucleotide metabolism: it produces dUMP, the immediate precursor of thymidine nucleotides and it decreases the intracellular concentration of dUTP so that uracil cannot be incorporated into DNA. The sequence is that of Deoxyuridine 5'-triphosphate nucleotidohydrolase from Rhizobium etli (strain CIAT 652).